The sequence spans 285 residues: MPSTWLAPAKINLFLHINKRRKDNYHNLQTIFQLLDYCDKLTCTITNNGVIKRTSGNKSVKQDQDLIIKAAKALQQYTGTTLGANLSIVKNIPIGGGLGGGSSDAATTLVALNQLWDTKLTQAQLMKLGLNLGADVPVFIFAQSAWAEGIGNILSPIKTPDHYFLVVFINKHISTKEIFSHYALTISEPQGKIANFSELVNTHNDCLQVAIKLEAEIGVALEHLNTCYNRVGQARMSGTGSCVFNEFLTEKDALAAAKKVPKKWMSFVTRAINNSPIYNWAVAKR.

The active site involves Lys-10. 93–103 (PIGGGLGGGSS) provides a ligand contact to ATP. Residue Asp-135 is part of the active site.

It belongs to the GHMP kinase family. IspE subfamily.

The enzyme catalyses 4-CDP-2-C-methyl-D-erythritol + ATP = 4-CDP-2-C-methyl-D-erythritol 2-phosphate + ADP + H(+). Its pathway is isoprenoid biosynthesis; isopentenyl diphosphate biosynthesis via DXP pathway; isopentenyl diphosphate from 1-deoxy-D-xylulose 5-phosphate: step 3/6. Its function is as follows. Catalyzes the phosphorylation of the position 2 hydroxy group of 4-diphosphocytidyl-2C-methyl-D-erythritol. This chain is 4-diphosphocytidyl-2-C-methyl-D-erythritol kinase, found in Vesicomyosocius okutanii subsp. Calyptogena okutanii (strain HA).